A 436-amino-acid chain; its full sequence is Serine--tRNA ligase (436 aa).

242–244 contributes to the L-serine binding site; it reads TAE. An ATP-binding site is contributed by 273–275; sequence RSE. E296 is an L-serine binding site. 360 to 363 is a binding site for ATP; that stretch reads EISS. S395 provides a ligand contact to L-serine.

Belongs to the class-II aminoacyl-tRNA synthetase family. Type-1 seryl-tRNA synthetase subfamily. Homodimer. The tRNA molecule binds across the dimer.

The protein resides in the cytoplasm. The catalysed reaction is tRNA(Ser) + L-serine + ATP = L-seryl-tRNA(Ser) + AMP + diphosphate + H(+). It catalyses the reaction tRNA(Sec) + L-serine + ATP = L-seryl-tRNA(Sec) + AMP + diphosphate + H(+). It participates in aminoacyl-tRNA biosynthesis; selenocysteinyl-tRNA(Sec) biosynthesis; L-seryl-tRNA(Sec) from L-serine and tRNA(Sec): step 1/1. In terms of biological role, catalyzes the attachment of serine to tRNA(Ser). Is also able to aminoacylate tRNA(Sec) with serine, to form the misacylated tRNA L-seryl-tRNA(Sec), which will be further converted into selenocysteinyl-tRNA(Sec). In Polynucleobacter necessarius subsp. necessarius (strain STIR1), this protein is Serine--tRNA ligase.